The following is a 208-amino-acid chain: Protein-L-isoaspartate O-methyltransferase (208 aa).

The active site involves Ser59.

Belongs to the methyltransferase superfamily. L-isoaspartyl/D-aspartyl protein methyltransferase family.

The protein resides in the cytoplasm. The catalysed reaction is [protein]-L-isoaspartate + S-adenosyl-L-methionine = [protein]-L-isoaspartate alpha-methyl ester + S-adenosyl-L-homocysteine. In terms of biological role, catalyzes the methyl esterification of L-isoaspartyl residues in peptides and proteins that result from spontaneous decomposition of normal L-aspartyl and L-asparaginyl residues. It plays a role in the repair and/or degradation of damaged proteins. This Pectobacterium atrosepticum (strain SCRI 1043 / ATCC BAA-672) (Erwinia carotovora subsp. atroseptica) protein is Protein-L-isoaspartate O-methyltransferase.